Consider the following 128-residue polypeptide: Sulfurtransferase TusD (128 aa).

Residue Cys78 is the Cysteine persulfide intermediate of the active site.

Belongs to the DsrE/TusD family. Heterohexamer, formed by a dimer of trimers. The hexameric TusBCD complex contains 2 copies each of TusB, TusC and TusD. The TusBCD complex interacts with TusE.

It is found in the cytoplasm. Functionally, part of a sulfur-relay system required for 2-thiolation of 5-methylaminomethyl-2-thiouridine (mnm(5)s(2)U) at tRNA wobble positions. Accepts sulfur from TusA and transfers it in turn to TusE. This chain is Sulfurtransferase TusD, found in Escherichia coli O139:H28 (strain E24377A / ETEC).